Here is a 277-residue protein sequence, read N- to C-terminus: Energy-coupling factor transporter ATP-binding protein EcfA1 (277 aa).

The ABC transporter domain occupies 4–238 (IETKNLNYSY…SELLSKNDLK (235 aa)). 38-45 (GKNGSGKS) is an ATP binding site.

This sequence belongs to the ABC transporter superfamily. Energy-coupling factor EcfA family. In terms of assembly, forms a stable energy-coupling factor (ECF) transporter complex composed of 2 membrane-embedded substrate-binding proteins (S component), 2 ATP-binding proteins (A component) and 2 transmembrane proteins (T component).

The protein resides in the cell membrane. ATP-binding (A) component of a common energy-coupling factor (ECF) ABC-transporter complex. Unlike classic ABC transporters this ECF transporter provides the energy necessary to transport a number of different substrates. This chain is Energy-coupling factor transporter ATP-binding protein EcfA1, found in Oenococcus oeni (strain ATCC BAA-331 / PSU-1).